The following is a 179-amino-acid chain: Acireductone dioxygenase (179 aa).

Residues 1–21 (MVQAWYMDDSTEDQRKPHHLQ) are disordered. Residues His88, His90, Glu94, and His133 each contribute to the Fe(2+) site. Residues His88, His90, Glu94, and His133 each coordinate Ni(2+).

The protein belongs to the acireductone dioxygenase (ARD) family. In terms of assembly, monomer. Interacts with MMP14. Fe(2+) is required as a cofactor. Ni(2+) serves as cofactor.

Its subcellular location is the cytoplasm. The protein resides in the nucleus. It is found in the cell membrane. The enzyme catalyses 1,2-dihydroxy-5-(methylsulfanyl)pent-1-en-3-one + O2 = 4-methylsulfanyl-2-oxobutanoate + formate + 2 H(+). The catalysed reaction is 1,2-dihydroxy-5-(methylsulfanyl)pent-1-en-3-one + O2 = 3-(methylsulfanyl)propanoate + CO + formate + 2 H(+). The protein operates within amino-acid biosynthesis; L-methionine biosynthesis via salvage pathway; L-methionine from S-methyl-5-thio-alpha-D-ribose 1-phosphate: step 5/6. Functionally, catalyzes 2 different reactions between oxygen and the acireductone 1,2-dihydroxy-3-keto-5-methylthiopentene (DHK-MTPene) depending upon the metal bound in the active site. Fe-containing acireductone dioxygenase (Fe-ARD) produces formate and 2-keto-4-methylthiobutyrate (KMTB), the alpha-ketoacid precursor of methionine in the methionine recycle pathway. Ni-containing acireductone dioxygenase (Ni-ARD) produces methylthiopropionate, carbon monoxide and formate, and does not lie on the methionine recycle pathway. In Xenopus tropicalis (Western clawed frog), this protein is Acireductone dioxygenase (adi1).